A 562-amino-acid polypeptide reads, in one-letter code: Urocanate hydratase (562 aa).

Residues Gly52–Gly53, Gln130, Gly176–Gly178, Glu196, Arg201, Asn242–Ala243, Gln263–His267, Tyr273–Leu274, and Tyr322 contribute to the NAD(+) site. Residue Cys410 is part of the active site. Gly492 serves as a coordination point for NAD(+).

The protein belongs to the urocanase family. NAD(+) is required as a cofactor.

The protein resides in the cytoplasm. It carries out the reaction 4-imidazolone-5-propanoate = trans-urocanate + H2O. It functions in the pathway amino-acid degradation; L-histidine degradation into L-glutamate; N-formimidoyl-L-glutamate from L-histidine: step 2/3. In terms of biological role, catalyzes the conversion of urocanate to 4-imidazolone-5-propionate. In Klebsiella pneumoniae (strain 342), this protein is Urocanate hydratase.